Consider the following 565-residue polypeptide: Sulfite reductase [NADPH] hemoprotein beta-component (565 aa).

Positions 429, 435, 474, and 478 each coordinate [4Fe-4S] cluster. C478 is a binding site for siroheme.

It belongs to the nitrite and sulfite reductase 4Fe-4S domain family. In terms of assembly, alpha(8)-beta(8). The alpha component is a flavoprotein, the beta component is a hemoprotein. It depends on siroheme as a cofactor. The cofactor is [4Fe-4S] cluster.

It carries out the reaction hydrogen sulfide + 3 NADP(+) + 3 H2O = sulfite + 3 NADPH + 4 H(+). The protein operates within sulfur metabolism; hydrogen sulfide biosynthesis; hydrogen sulfide from sulfite (NADPH route): step 1/1. Component of the sulfite reductase complex that catalyzes the 6-electron reduction of sulfite to sulfide. This is one of several activities required for the biosynthesis of L-cysteine from sulfate. The protein is Sulfite reductase [NADPH] hemoprotein beta-component of Shewanella sp. (strain MR-7).